The following is a 659-amino-acid chain: Cysteine-rich receptor-like protein kinase 5 (659 aa).

A signal peptide spans 1–24 (MSAYTSLNFLFLLTFFIGSLRVSA). Residues 25–279 (QLQDPTYVGH…FPPGKGKNST (255 aa)) lie on the Extracellular side of the membrane. Gnk2-homologous domains are found at residues 28-132 (DPTY…DRNI) and 138-243 (TTTT…VYPF). 2 N-linked (GlcNAc...) asparagine glycosylation sites follow: asparagine 175 and asparagine 277. The helical transmembrane segment at 280-300 (VIIIAIVVPVAISVLICVAVF) threads the bilayer. The Cytoplasmic portion of the chain corresponds to 301–659 (SFHASKRAKK…AASITILAPR (359 aa)). Residues 340–619 (FSMCNKLGQG…QMLTTSSIAL (280 aa)) enclose the Protein kinase domain. ATP is bound by residues 346-354 (LGQGGFGQV) and lysine 368. Position 413 is a phosphotyrosine (tyrosine 413). Aspartate 465 functions as the Proton acceptor in the catalytic mechanism. At threonine 505 the chain carries Phosphothreonine. The residue at position 513 (tyrosine 513) is a Phosphotyrosine.

The protein belongs to the protein kinase superfamily. Ser/Thr protein kinase family. CRK subfamily. Interacts with CRKIP1 (KAPP), CRKIP2 and CRKIP3, three kinase-associated type 2C proteins.

Its subcellular location is the membrane. The catalysed reaction is L-seryl-[protein] + ATP = O-phospho-L-seryl-[protein] + ADP + H(+). It catalyses the reaction L-threonyl-[protein] + ATP = O-phospho-L-threonyl-[protein] + ADP + H(+). Its function is as follows. Involved in multiple distinct defense responses. May function as a disease resistance (R) protein. The polypeptide is Cysteine-rich receptor-like protein kinase 5 (CRK5) (Arabidopsis thaliana (Mouse-ear cress)).